The primary structure comprises 988 residues: Chloride channel protein 1 (988 aa).

At 1-118 the chain is on the cytoplasmic side; it reads MEQSRSQQRG…VVRRKLGEDG (118 aa). Over residues 65 to 75 the composition is skewed to basic and acidic residues; the sequence is HKEQFSDREQD. The tract at residues 65 to 92 is disordered; it reads HKEQFSDREQDIGMPKKTGSSSTVDSKD. The helical transmembrane segment at 119-150 threads the bilayer; that stretch reads IFLVLLGLLMALVSWSMDYVSAKSLQAYKWSY. Over 151-158 the chain is Extracellular; sequence AQMQPSLP. The helical transmembrane segment at 159 to 179 threads the bilayer; the sequence is LQFLVWVTFPLVLILFSALFC. Residues 180–183 are Cytoplasmic-facing; the sequence is HLIS. An intramembrane region (note=Loop between two helices) is located at residues 184 to 189; sequence PQAVGS. Positions 188–192 match the Selectivity filter part_1 motif; sequence GSGIP. Ser-189 contributes to the chloride binding site. Residues 190-195 constitute an intramembrane region (helical); that stretch reads GIPEMK. The Cytoplasmic portion of the chain corresponds to 196–208; the sequence is TILRGVVLKEYLT. The helical intramembrane region spans 209 to 224; the sequence is MKAFVAKVVALTAGLG. An intramembrane region (note=Loop between two helices) is located at residues 225–230; it reads SGIPVG. The Selectivity filter part_2 signature appears at 230–234; it reads GKEGP. The segment at residues 231–246 is an intramembrane region (helical); sequence KEGPFVHIASICAAVL. The Cytoplasmic portion of the chain corresponds to 247-268; the sequence is SKFMSVFCGVYEQPYYYSDILT. 2 consecutive intramembrane regions (helical) follow at residues 269–280 and 281–290; these read VGCAVGVGCCFG and TPLGGVLFSI. Residues 291-301 lie on the Cytoplasmic side of the membrane; sequence EVTSTYFAVRN. The helical transmembrane segment at 302 to 321 threads the bilayer; that stretch reads YWRGFFAATFSAFVFRVLAV. The Extracellular portion of the chain corresponds to 322–347; it reads WNKDAVTITALFRTNFRMDFPFDLKE. A helical transmembrane segment spans residues 348–376; sequence LPAFAAIGICCGLLGAVFVYLHRQVMLGV. At 377-390 the chain is on the cytoplasmic side; sequence RKHKALSQFLAKHR. A helical membrane pass occupies residues 391-408; it reads LLYPGIVTFVIASFTFPP. Residues 409–414 are Extracellular-facing; that stretch reads GMGQFM. Residues 415–418 constitute an intramembrane region (note=Loop between two helices); that stretch reads AGEL. The segment at residues 419–426 is an intramembrane region (helical); the sequence is MPREAIST. The Extracellular portion of the chain corresponds to 427–457; sequence LFDNNTWVKHAGDPESLGQSAVWIHPRVNVV. Residues 458–475 constitute an intramembrane region (helical); that stretch reads IIIFLFFVMKFWMSIVAT. The note=Loop between two helices intramembrane region spans 476–482; sequence TMPIPCG. Residues 482 to 486 carry the Selectivity filter part_3 motif; sequence GGFMP. The segment at residues 483-498 is an intramembrane region (helical); the sequence is GFMPVFVLGAAFGRLV. Phe-484 contributes to the chloride binding site. The Extracellular segment spans residues 499–521; it reads GEIMAMLFPDGILFDDIIYKILP. Positions 522-538 form an intramembrane region, helical; the sequence is GGYAVIGAAALTGAVSH. The segment at residues 539-540 is an intramembrane region (note=Loop between two helices); the sequence is TV. The helical intramembrane region spans 541 to 554; it reads STAVICFELTGQIA. Residues 555–557 are Extracellular-facing; sequence HIL. Residues 558-571 constitute an intramembrane region (helical); sequence PMMVAVILANMVAQ. The segment at residues 572 to 575 is an intramembrane region (note=Loop between two helices); that stretch reads SLQP. Residues 576 to 578 constitute an intramembrane region (helical); it reads SLY. Tyr-578 provides a ligand contact to chloride. At 579-988 the chain is on the cytoplasmic side; the sequence is DSIIQVKKLP…DEEDEDELIL (410 aa). The CBS 1 domain occupies 609–668; it reads MVRDVKFVSASYTYGELRTLLQTTTVKTLPLVDSKDSMILLGSVERSELQALLQRHLCPE. The tract at residues 713–764 is disordered; the sequence is EDEDEDLSGKSELPPSLALHPSTTAPLSPEEPNGPLPGHKQQPEAPEPAGQR. The CBS 2 domain maps to 821–876; sequence IDQSPFQLVEQTTLHKTHTLFSLLGLHLAYVTSMGKLRGVLALEELQKAIEGHTKS. Residues 880–988 form a disordered region; sequence LRPPLASFRN…DEEDEDELIL (109 aa). Position 886 is a phosphoserine (Ser-886). The segment covering 887 to 906 has biased composition (polar residues); it reads FRNTTSTRKSTGAPPSSAEN. Residues 929–941 are compositionally biased toward pro residues; it reads TPVPSPSPEPPLS. Acidic residues-rich tracts occupy residues 950–967 and 979–988; these read ELEE…EELA and DEEDEDELIL.

It belongs to the chloride channel (TC 2.A.49) family. ClC-1/CLCN1 subfamily. Homodimer. In terms of tissue distribution, predominantly expressed in skeletal muscles.

It localises to the cell membrane. It is found in the sarcolemma. The protein localises to the T-tubule. It carries out the reaction chloride(in) = chloride(out). It catalyses the reaction thiocyanate(in) = thiocyanate(out). The enzyme catalyses bromide(in) = bromide(out). The catalysed reaction is nitrate(in) = nitrate(out). It carries out the reaction iodide(out) = iodide(in). Its activity is regulated as follows. Modulated by membrane voltage with depolarization favouring channel opening and hyperpolarization favouring channel closure. Inhibited by acidic pH and ATP binding due to a shift of voltage dependence of common gating to more positive voltages. Inhibited by 9-anthracene-carboxylic. Voltage-gated chloride channel involved in skeletal muscle excitability. Generates most of the plasma membrane chloride conductance in skeletal muscle fibers, stabilizes the resting membrane potential and contributes to the repolarization phase during action potential firing. Forms a homodimeric channel where each subunit has its own ion conduction pathway. Conducts double-barreled currents controlled by two types of gates, two fast glutamate gates that control each subunit independently and a slow common gate that opens and shuts off both subunits simultaneously. Has a significant open probability at muscle resting potential and is further activated upon membrane depolarization. Permeable to small monovalent anions with ion selectivity for chloride &gt; thiocyanate &gt; bromide &gt; nitrate &gt; iodide. The polypeptide is Chloride channel protein 1 (Homo sapiens (Human)).